A 537-amino-acid chain; its full sequence is Putative cysteine ligase BshC (537 aa).

Belongs to the BshC family.

Involved in bacillithiol (BSH) biosynthesis. May catalyze the last step of the pathway, the addition of cysteine to glucosamine malate (GlcN-Mal) to generate BSH. The polypeptide is Putative cysteine ligase BshC (Staphylococcus saprophyticus subsp. saprophyticus (strain ATCC 15305 / DSM 20229 / NCIMB 8711 / NCTC 7292 / S-41)).